The primary structure comprises 919 residues: Transcriptional regulatory protein EDS1 (919 aa).

Residues 1–54 (MSHHVPNLYGTPIRDPHERKRNSASMGEVNQSVSSRNCERGSEKGTKQRKKASR) are disordered. Over residues 23–36 (SASMGEVNQSVSSR) the composition is skewed to polar residues. Residues 37-46 (NCERGSEKGT) are compositionally biased toward basic and acidic residues. The segment at residues 56 to 85 (CDQCRRKRIKCRFDKHTGVCQGCLEVGEKC) is a DNA-binding region (zn(2)-C6 fungal-type). The disordered stretch occupies residues 297-338 (AGCPNKKLGTDGRSDKWDKNSTWKPVYRSSNPSHPSTEKNVS). Over residues 304–317 (LGTDGRSDKWDKNS) the composition is skewed to basic and acidic residues. The span at 318–338 (TWKPVYRSSNPSHPSTEKNVS) shows a compositional bias: polar residues.

Binds DNA in a sequence-specific manner.

Its subcellular location is the nucleus. The protein is Transcriptional regulatory protein EDS1 (EDS1) of Saccharomyces cerevisiae (strain RM11-1a) (Baker's yeast).